Here is a 44-residue protein sequence, read N- to C-terminus: Photosystem I reaction center subunit IX (44 aa).

A helical membrane pass occupies residues 9-29; sequence FMRSAPIVAAIWISLTAGIII.

It belongs to the PsaJ family.

Its subcellular location is the cellular thylakoid membrane. May help in the organization of the PsaE and PsaF subunits. The chain is Photosystem I reaction center subunit IX from Prochlorococcus marinus (strain MIT 9515).